The primary structure comprises 955 residues: Glycine dehydrogenase (decarboxylating) (955 aa).

At Lys-705 the chain carries N6-(pyridoxal phosphate)lysine.

This sequence belongs to the GcvP family. In terms of assembly, the glycine cleavage system is composed of four proteins: P, T, L and H. It depends on pyridoxal 5'-phosphate as a cofactor.

It catalyses the reaction N(6)-[(R)-lipoyl]-L-lysyl-[glycine-cleavage complex H protein] + glycine + H(+) = N(6)-[(R)-S(8)-aminomethyldihydrolipoyl]-L-lysyl-[glycine-cleavage complex H protein] + CO2. Functionally, the glycine cleavage system catalyzes the degradation of glycine. The P protein binds the alpha-amino group of glycine through its pyridoxal phosphate cofactor; CO(2) is released and the remaining methylamine moiety is then transferred to the lipoamide cofactor of the H protein. This is Glycine dehydrogenase (decarboxylating) from Aliivibrio fischeri (strain ATCC 700601 / ES114) (Vibrio fischeri).